The chain runs to 133 residues: Small ribosomal subunit protein uS11 (133 aa).

The protein belongs to the universal ribosomal protein uS11 family. As to quaternary structure, part of the 30S ribosomal subunit.

Located on the platform of the 30S subunit. The polypeptide is Small ribosomal subunit protein uS11 (Hyperthermus butylicus (strain DSM 5456 / JCM 9403 / PLM1-5)).